The following is a 99-amino-acid chain: Protein Tat (99 aa).

The interaction with human CREBBP stretch occupies residues 1–24 (MDPVDPKLEPWNHPGSQPQTACNN). Residues 1-48 (MDPVDPKLEPWNHPGSQPQTACNNCYCKKCCYHCQMCFLKKGLGISYG) are transactivation. 3 residues coordinate Zn(2+): Cys22, Cys25, and Cys27. The segment at 22 to 37 (CNNCYCKKCCYHCQMC) is cysteine-rich. An N6-acetyllysine; by host PCAF modification is found at Lys28. Residues Cys30, His33, Cys34, and Cys37 each contribute to the Zn(2+) site. Positions 38-48 (FLKKGLGISYG) are core. Over residues 48–58 (GRKKRSQRHRT) the composition is skewed to basic residues. Residues 48-99 (GRKKRSQRHRTPASLQDHQNSISKQPLSRTHGDPTGPKEQKKEVASKTETDP) are disordered. The Nuclear localization signal, RNA-binding (TAR), and protein transduction signature appears at 49-57 (RKKRSQRHR). The interaction with the host capping enzyme RNGTT stretch occupies residues 49–86 (RKKRSQRHRTPASLQDHQNSISKQPLSRTHGDPTGPKE). Lys50 and Lys51 each carry N6-acetyllysine; by host EP300 and GCN5L2. Position 52 is an asymmetric dimethylarginine; by host PRMT6 (Arg52). Positions 60–75 (ASLQDHQNSISKQPLS) are enriched in polar residues. A Glycyl lysine isopeptide (Lys-Gly) (interchain with G-Cter in ubiquitin) cross-link involves residue Lys71. Basic and acidic residues predominate over residues 77 to 99 (THGDPTGPKEQKKEVASKTETDP).

It belongs to the lentiviruses Tat family. As to quaternary structure, interacts with host CCNT1. Associates with the P-TEFb complex composed at least of Tat, P-TEFb (CDK9 and CCNT1), TAR RNA, RNA Pol II. Recruits the HATs CREBBP, TAF1/TFIID, EP300, PCAF and GCN5L2. Interacts with host KAT5/Tip60; this interaction targets the latter to degradation. Interacts with the host deacetylase SIRT1. Interacts with host capping enzyme RNGTT; this interaction stimulates RNGTT. Binds to host KDR, and to the host integrins ITGAV/ITGB3 and ITGA5/ITGB1. Interacts with host KPNB1/importin beta-1 without previous binding to KPNA1/importin alpha-1. Interacts with EIF2AK2. Interacts with host nucleosome assembly protein NAP1L1; this interaction may be required for the transport of Tat within the nucleus, since the two proteins interact at the nuclear rim. Interacts with host C1QBP/SF2P32; this interaction involves lysine-acetylated Tat. Interacts with the host chemokine receptors CCR2, CCR3 and CXCR4. Interacts with host DPP4/CD26; this interaction may trigger an anti-proliferative effect. Interacts with host LDLR. Interacts with the host extracellular matrix metalloproteinase MMP1. Interacts with host PRMT6; this interaction mediates Tat's methylation. Interacts with, and is ubiquitinated by MDM2/Hdm2. Interacts with host PSMC3 and HTATIP2. Interacts with STAB1; this interaction may overcome SATB1-mediated repression of IL2 and IL2RA (interleukin) in T cells by binding to the same domain than HDAC1. Interacts (when acetylated) with human CDK13, thereby increasing HIV-1 mRNA splicing and promoting the production of the doubly spliced HIV-1 protein Nef. Interacts with host TBP; this interaction modulates the activity of transcriptional pre-initiation complex. Interacts with host RELA. Interacts with host PLSCR1; this interaction negatively regulates Tat transactivation activity by altering its subcellular distribution. Post-translationally, asymmetrical arginine methylation by host PRMT6 seems to diminish the transactivation capacity of Tat and affects the interaction with host CCNT1. Acetylation by EP300, CREBBP, GCN5L2/GCN5 and PCAF regulates the transactivation activity of Tat. EP300-mediated acetylation of Lys-50 promotes dissociation of Tat from the TAR RNA through the competitive binding to PCAF's bromodomain. In addition, the non-acetylated Tat's N-terminus can also interact with PCAF. PCAF-mediated acetylation of Lys-28 enhances Tat's binding to CCNT1. Lys-50 is deacetylated by SIRT1. In terms of processing, polyubiquitination by host MDM2 does not target Tat to degradation, but activates its transactivation function and fosters interaction with CCNT1 and TAR RNA. Post-translationally, phosphorylated by EIF2AK2 on serine and threonine residues adjacent to the basic region important for TAR RNA binding and function. Phosphorylation of Tat by EIF2AK2 is dependent on the prior activation of EIF2AK2 by dsRNA.

The protein resides in the host nucleus. It localises to the host nucleolus. Its subcellular location is the host cytoplasm. The protein localises to the secreted. In terms of biological role, transcriptional activator that increases RNA Pol II processivity, thereby increasing the level of full-length viral transcripts. Recognizes a hairpin structure at the 5'-LTR of the nascent viral mRNAs referred to as the transactivation responsive RNA element (TAR) and recruits the cyclin T1-CDK9 complex (P-TEFb complex) that will in turn hyperphosphorylate the RNA polymerase II to allow efficient elongation. The CDK9 component of P-TEFb and other Tat-activated kinases hyperphosphorylate the C-terminus of RNA Pol II that becomes stabilized and much more processive. Other factors such as HTATSF1/Tat-SF1, SUPT5H/SPT5, and HTATIP2 are also important for Tat's function. Besides its effect on RNA Pol II processivity, Tat induces chromatin remodeling of proviral genes by recruiting the histone acetyltransferases (HATs) CREBBP, EP300 and PCAF to the chromatin. This also contributes to the increase in proviral transcription rate, especially when the provirus integrates in transcriptionally silent region of the host genome. To ensure maximal activation of the LTR, Tat mediates nuclear translocation of NF-kappa-B by interacting with host RELA. Through its interaction with host TBP, Tat may also modulate transcription initiation. Tat can reactivate a latently infected cell by penetrating in it and transactivating its LTR promoter. In the cytoplasm, Tat is thought to act as a translational activator of HIV-1 mRNAs. Its function is as follows. Extracellular circulating Tat can be endocytosed by surrounding uninfected cells via the binding to several surface receptors such as CD26, CXCR4, heparan sulfate proteoglycans (HSPG) or LDLR. Neurons are rarely infected, but they internalize Tat via their LDLR. Through its interaction with nuclear HATs, Tat is potentially able to control the acetylation-dependent cellular gene expression. Modulates the expression of many cellular genes involved in cell survival, proliferation or in coding for cytokines or cytokine receptors. Tat plays a role in T-cell and neurons apoptosis. Tat induced neurotoxicity and apoptosis probably contribute to neuroAIDS. Circulating Tat also acts as a chemokine-like and/or growth factor-like molecule that binds to specific receptors on the surface of the cells, affecting many cellular pathways. In the vascular system, Tat binds to ITGAV/ITGB3 and ITGA5/ITGB1 integrins dimers at the surface of endothelial cells and competes with bFGF for heparin-binding sites, leading to an excess of soluble bFGF. This is Protein Tat from Homo sapiens (Human).